A 174-amino-acid polypeptide reads, in one-letter code: Protein-export protein SecB (174 aa).

This sequence belongs to the SecB family. In terms of assembly, homotetramer, a dimer of dimers. One homotetramer interacts with 1 SecA dimer.

It localises to the cytoplasm. Functionally, one of the proteins required for the normal export of preproteins out of the cell cytoplasm. It is a molecular chaperone that binds to a subset of precursor proteins, maintaining them in a translocation-competent state. It also specifically binds to its receptor SecA. The chain is Protein-export protein SecB from Ehrlichia ruminantium (strain Gardel).